The primary structure comprises 297 residues: Homoserine kinase (297 aa).

82–92 is an ATP binding site; sequence PLTRGLGSSAS.

It belongs to the GHMP kinase family. Homoserine kinase subfamily.

The protein resides in the cytoplasm. The enzyme catalyses L-homoserine + ATP = O-phospho-L-homoserine + ADP + H(+). It participates in amino-acid biosynthesis; L-threonine biosynthesis; L-threonine from L-aspartate: step 4/5. Its function is as follows. Catalyzes the ATP-dependent phosphorylation of L-homoserine to L-homoserine phosphate. This Bacillus mycoides (strain KBAB4) (Bacillus weihenstephanensis) protein is Homoserine kinase.